The primary structure comprises 156 residues: Histidine-containing phosphotransfer protein 2 (156 aa).

Methionine 1 bears the N-acetylmethionine mark. The HPt domain maps to 40–147; the sequence is SPDFVSEVLS…NLEKQIIQAG (108 aa). At histidine 82 the chain carries Phosphohistidine.

Interacts with the B-type response regulators ARR1, ARR2 and ARR10. Binds to AHK1, AHK2, AHK3, AHK4, AHK5, ETR1 and CKI1. In terms of processing, two-component system major event consists of a His-to-Asp phosphorelay between a sensor histidine kinase (HK) and a response regulator (RR). In plants, the His-to-Asp phosphorelay involves an additional intermediate named Histidine-containing phosphotransfer protein (HPt). This multistep phosphorelay consists of a His-Asp-His-Asp sequential transfer of a phosphate group between first a His and an Asp of the HK protein, followed by the transfer to a conserved His of the HPt protein and finally the transfer to an Asp in the receiver domain of the RR protein. In terms of tissue distribution, strongly expressed in flowers and roots. Detected also in leaves, siliques and stems.

Its subcellular location is the cytoplasm. The protein localises to the cytosol. It is found in the nucleus. In terms of biological role, functions as a two-component phosphorelay mediators between cytokinin sensor histidine kinases and response regulator (B-type ARRs). Plays an important role in propagating cytokinin signal transduction through the multistep His-to-Asp phosphorelay. The polypeptide is Histidine-containing phosphotransfer protein 2 (AHP2) (Arabidopsis thaliana (Mouse-ear cress)).